A 238-amino-acid polypeptide reads, in one-letter code: ATP synthase subunit O, mitochondrial (238 aa).

Residues Met-1–Tyr-36 constitute a mitochondrion transit peptide. The residue at position 90 (Thr-90) is a Phosphothreonine.

This sequence belongs to the ATPase delta chain family. As to quaternary structure, F-type ATPases have 2 components, CF(1) - the catalytic core - and CF(0) - the membrane proton channel. CF(1) has five subunits: alpha(3), beta(3), gamma(1), delta(1), epsilon(1). CF(0) has three main subunits: a, b and c.

It is found in the mitochondrion. It localises to the mitochondrion inner membrane. In terms of biological role, mitochondrial membrane ATP synthase (F(1)F(0) ATP synthase or Complex V) produces ATP from ADP in the presence of a proton gradient across the membrane which is generated by electron transport complexes of the respiratory chain. F-type ATPases consist of two structural domains, F(1) - containing the extramembraneous catalytic core and F(0) - containing the membrane proton channel, linked together by a central stalk and a peripheral stalk. During catalysis, ATP synthesis in the catalytic domain of F(1) is coupled via a rotary mechanism of the central stalk subunits to proton translocation. Part of the complex F(0) domain and the peripheric stalk, which acts as a stator to hold the catalytic alpha(3)beta(3) subcomplex and subunit a/ATP6 static relative to the rotary elements. The sequence is that of ATP synthase subunit O, mitochondrial from Arabidopsis thaliana (Mouse-ear cress).